Here is a 256-residue protein sequence, read N- to C-terminus: Trans-aconitate 2-methyltransferase (256 aa).

The protein belongs to the methyltransferase superfamily. Tam family.

The protein localises to the cytoplasm. It catalyses the reaction trans-aconitate + S-adenosyl-L-methionine = (E)-3-(methoxycarbonyl)pent-2-enedioate + S-adenosyl-L-homocysteine. Functionally, catalyzes the S-adenosylmethionine monomethyl esterification of trans-aconitate. This chain is Trans-aconitate 2-methyltransferase, found in Agrobacterium fabrum (strain C58 / ATCC 33970) (Agrobacterium tumefaciens (strain C58)).